Here is a 421-residue protein sequence, read N- to C-terminus: Ig-like V-type domain-containing protein FAM187A (421 aa).

The signal sequence occupies residues 1–18; that stretch reads MNLAHTTVLLWAWGSLQA. Over 19–377 the chain is Extracellular; it reads FEIVEKENIF…VSFSDPETRA (359 aa). The Ig-like V-type domain occupies 268-362; that stretch reads PWLPQVPIQF…IAGFRLGVTS (95 aa). Cys-290 and Cys-346 are joined by a disulfide. N-linked (GlcNAc...) asparagine glycosylation occurs at Asn-318. Residues 378 to 398 traverse the membrane as a helical segment; it reads ALGLILIGYMLITVIFISIHL. Residues 399–421 lie on the Cytoplasmic side of the membrane; that stretch reads CRCCCYLFRFCPNFSPRLSRPQL.

It belongs to the FAM187 family.

Its subcellular location is the membrane. This Bos taurus (Bovine) protein is Ig-like V-type domain-containing protein FAM187A (FAM187A).